Reading from the N-terminus, the 896-residue chain is Androgen receptor (896 aa).

The modulating stretch occupies residues 1–534; it reads MEVQLGLGRV…PIDYYFPPQK (534 aa). Positions 1-563 are interaction with ZNF318; the sequence is MEVQLGLGRV…GSCKVFFKRA (563 aa). Disordered stretches follow at residues 35–152 and 178–218; these read QNPG…LSLL and LLQQ…YLGG. The span at 54 to 78 shows a compositional bias: low complexity; the sequence is LQQQQLQQQETSPRRQQQQQQQPSE. Position 65 is a phosphoserine; by CDK9 (Ser65). A Phosphoserine modification is found at Ser81. The span at 178–189 shows a compositional bias: low complexity; the sequence is LLQQQQQQQQQQ. A compositionally biased stretch (polar residues) spans 190-199; the sequence is EAVSEGNSSG. A Phosphotyrosine; by CSK modification is found at Tyr215. Ser248 is subject to Phosphoserine. The residue at position 259 (Tyr259) is a Phosphotyrosine; by CSK and TNK2. A phosphotyrosine; by CSK mark is found at Tyr299, Tyr338, Tyr349, and Tyr354. Tyr355 is subject to Phosphotyrosine; by CSK and TNK2. Lys378 participates in a covalent cross-link: Glycyl lysine isopeptide (Lys-Gly) (interchain with G-Cter in SUMO). Tyr385 is modified (phosphotyrosine; by CSK). Residue Lys497 forms a Glycyl lysine isopeptide (Lys-Gly) (interchain with G-Cter in SUMO) linkage. Tyr511 and Tyr528 each carry phosphotyrosine; by CSK. The tract at residues 528–895 is interaction with LPXN; it reads YYFPPQKTCL…GKVKPIYFHT (368 aa). A DNA-binding region (nuclear receptor) is located at residues 535–608; it reads TCLICGDEAS…AGMTLGARKL (74 aa). 2 consecutive NR C4-type zinc fingers follow at residues 536 to 556 and 572 to 596; these read CLIC…CGSC and CASR…LRKC. Residues 548-638 form an interaction with HIPK3 region; that stretch reads YGALTCGSCK…TEEPAQKLTV (91 aa). Positions 568 to 895 are interaction with CCAR1; sequence QKYLCASRND…GKVKPIYFHT (328 aa). Positions 601–895 are interaction with KAT7; it reads MTLGARKLKK…GKVKPIYFHT (295 aa). Ser627 is subject to Phosphoserine; by STK4/MST1. One can recognise an NR LBD domain in the interval 645-876; sequence ECQPIFLNVL…DFPEMMAEII (232 aa). Residues Asn682 and Arg729 each coordinate 17beta-hydroxy-5alpha-androstan-3-one. Glycyl lysine isopeptide (Lys-Gly) (interchain with G-Cter in ubiquitin) cross-links involve residues Lys822 and Lys824. Thr854 provides a ligand contact to 17beta-hydroxy-5alpha-androstan-3-one. Tyr892 is subject to Phosphotyrosine; by CSK.

The protein belongs to the nuclear hormone receptor family. NR3 subfamily. Binds DNA as a homodimer. Part of a ternary complex containing AR, EFCAB6/DJBP and PARK7. Interacts with HIPK3 and NR0B2 in the presence of androgen. The ligand binding domain interacts with KAT7/HBO1 in the presence of dihydrotestosterone. Interacts with EFCAB6/DJBP, PQBP1, RANBP9, RBAK, SPDEF, SRA1, TGFB1I1 and RREB1. Interacts with ZMIZ1/ZIMP10 and ZMIZ2/ZMIP7 which both enhance its transactivation activity. Interacts with SLC30A9 and RAD54L2/ARIP4. Interacts with MACROD1 (via macro domain). Interacts via the ligand-binding domain with LXXLL and FXXLF motifs from NCOA1, NCOA2, NCOA3 and MAGEA11. Interacts (via nuclear receptor DNA binding domain and nuclear receptor ligand binding domain) with NCOA4. The AR N-terminal poly-Gln region binds Ran resulting in enhancement of AR-mediated transactivation. Ran-binding decreases as the poly-Gln length increases. Interacts with HIP1 (via coiled coil domain). Interacts (via ligand-binding domain) with TRIM68. Interacts with TNK2. Interacts with USP26. Interacts with RNF6. Interacts (regulated by RNF6 probably through polyubiquitination) with RNF14; regulates AR transcriptional activity. Interacts with PRMT2 and TRIM24. Interacts with RACK1. Interacts with RANBP10; this interaction enhances dihydrotestosterone-induced AR transcriptional activity. Interacts with PRPF6 in a hormone-independent way; this interaction enhances dihydrotestosterone-induced AR transcriptional activity. Interacts with STK4/MST1. Interacts with ZIPK/DAPK3. Interacts with LPXN. Interacts with MAK. Part of a complex containing AR, MAK and NCOA3. Interacts with CRY1. Interacts with CCAR1 and GATA2. Interacts with ZNF318. Interacts with BUD31. Interacts with ARID4A. Interacts with ARID4B. Interacts (via NR LBD domain) with ZBTB7A; the interaction is direct and androgen-dependent. Interacts with NCOR1. Interacts with NCOR2. Interacts with CRY2 in a ligand-dependent manner. Phosphorylated in prostate cancer cells in response to several growth factors including EGF. Phosphorylation is induced by c-Src kinase (CSK). Tyr-511 is one of the major phosphorylation sites and an increase in phosphorylation and Src kinase activity is associated with prostate cancer progression. Phosphorylation by TNK2 enhances the DNA-binding and transcriptional activity. Phosphorylation at Ser-65 by CDK9 regulates AR promoter selectivity and cell growth. Post-translationally, sumoylated on Lys-378 (major) and Lys-497. Ubiquitinated. Deubiquitinated by USP26. 'Lys-6' and 'Lys-27'-linked polyubiquitination by RNF6 modulates AR transcriptional activity and specificity. In terms of processing, palmitoylated by ZDHHC7 and ZDHHC21. Palmitoylation is required for plasma membrane targeting and for rapid intracellular signaling via ERK and AKT kinases and cAMP generation.

Its subcellular location is the nucleus. The protein localises to the cytoplasm. Its function is as follows. Steroid hormone receptors are ligand-activated transcription factors that regulate eukaryotic gene expression and affect cellular proliferation and differentiation in target tissues. Transcription factor activity is modulated by bound coactivator and corepressor proteins like ZBTB7A that recruits NCOR1 and NCOR2 to the androgen response elements/ARE on target genes, negatively regulating androgen receptor signaling and androgen-induced cell proliferation. Transcription activation is also down-regulated by NR0B2. Activated, but not phosphorylated, by HIPK3 and ZIPK/DAPK3. This Sus scrofa (Pig) protein is Androgen receptor (AR).